Here is a 194-residue protein sequence, read N- to C-terminus: Type II secretion system protein H (194 aa).

The propeptide at 1-6 (MTATRG) is leader sequence. At F7 the chain carries N-methylphenylalanine. A helical transmembrane segment spans residues 12–32 (ILLVLVLVSASAVAVIATFPV).

The protein belongs to the GSP H family. Type II secretion is composed of four main components: the outer membrane complex, the inner membrane complex, the cytoplasmic secretion ATPase and the periplasm-spanning pseudopilus. Interacts with core component EpsG. In terms of processing, cleaved by prepilin peptidase. Post-translationally, methylated by prepilin peptidase at the amino group of the N-terminal phenylalanine once the leader sequence is cleaved by prepilin peptidase.

Its subcellular location is the cell inner membrane. In terms of biological role, component of the type II secretion system required for the energy-dependent secretion of extracellular factors such as proteases and toxins from the periplasm. Part of the pseudopilus tip complex that is critical for the recognition and binding of secretion substrates. The protein is Type II secretion system protein H (epsH) of Vibrio cholerae serotype O1 (strain ATCC 39315 / El Tor Inaba N16961).